A 957-amino-acid polypeptide reads, in one-letter code: Leucine--tRNA ligase (957 aa).

The short motif at 66–77 (PYPSGAGLHVGH) is the 'HIGH' region element. Residues 728 to 732 (KMGKS) carry the 'KMSKS' region motif. Lys-731 serves as a coordination point for ATP.

The protein belongs to the class-I aminoacyl-tRNA synthetase family.

It localises to the cytoplasm. It carries out the reaction tRNA(Leu) + L-leucine + ATP = L-leucyl-tRNA(Leu) + AMP + diphosphate. The sequence is that of Leucine--tRNA ligase from Streptomyces griseus subsp. griseus (strain JCM 4626 / CBS 651.72 / NBRC 13350 / KCC S-0626 / ISP 5235).